Reading from the N-terminus, the 309-residue chain is 4-hydroxy-3-methylbut-2-enyl diphosphate reductase (309 aa).

C13 is a [4Fe-4S] cluster binding site. Residues H42 and H75 each coordinate (2E)-4-hydroxy-3-methylbut-2-enyl diphosphate. 2 residues coordinate dimethylallyl diphosphate: H42 and H75. Isopentenyl diphosphate is bound by residues H42 and H75. C97 provides a ligand contact to [4Fe-4S] cluster. A (2E)-4-hydroxy-3-methylbut-2-enyl diphosphate-binding site is contributed by H125. H125 contacts dimethylallyl diphosphate. Position 125 (H125) interacts with isopentenyl diphosphate. The active-site Proton donor is the E127. T165 is a (2E)-4-hydroxy-3-methylbut-2-enyl diphosphate binding site. C195 is a [4Fe-4S] cluster binding site. The (2E)-4-hydroxy-3-methylbut-2-enyl diphosphate site is built by S223, S224, N225, and S267. 4 residues coordinate dimethylallyl diphosphate: S223, S224, N225, and S267. Positions 223, 224, 225, and 267 each coordinate isopentenyl diphosphate.

It belongs to the IspH family. Requires [4Fe-4S] cluster as cofactor.

It catalyses the reaction isopentenyl diphosphate + 2 oxidized [2Fe-2S]-[ferredoxin] + H2O = (2E)-4-hydroxy-3-methylbut-2-enyl diphosphate + 2 reduced [2Fe-2S]-[ferredoxin] + 2 H(+). It carries out the reaction dimethylallyl diphosphate + 2 oxidized [2Fe-2S]-[ferredoxin] + H2O = (2E)-4-hydroxy-3-methylbut-2-enyl diphosphate + 2 reduced [2Fe-2S]-[ferredoxin] + 2 H(+). It participates in isoprenoid biosynthesis; dimethylallyl diphosphate biosynthesis; dimethylallyl diphosphate from (2E)-4-hydroxy-3-methylbutenyl diphosphate: step 1/1. The protein operates within isoprenoid biosynthesis; isopentenyl diphosphate biosynthesis via DXP pathway; isopentenyl diphosphate from 1-deoxy-D-xylulose 5-phosphate: step 6/6. In terms of biological role, catalyzes the conversion of 1-hydroxy-2-methyl-2-(E)-butenyl 4-diphosphate (HMBPP) into a mixture of isopentenyl diphosphate (IPP) and dimethylallyl diphosphate (DMAPP). Acts in the terminal step of the DOXP/MEP pathway for isoprenoid precursor biosynthesis. The chain is 4-hydroxy-3-methylbut-2-enyl diphosphate reductase from Chlamydia felis (strain Fe/C-56) (Chlamydophila felis).